The primary structure comprises 251 residues: L,D-transpeptidase 1 (251 aa).

An N-terminal signal peptide occupies residues M1–A28. Residues L125–V250 form the L,D-TPase catalytic domain. Residues Y190 and S203–G204 each bind substrate. H208 serves as the catalytic Proton donor/acceptor. C226 (nucleophile) is an active-site residue. N228 serves as a coordination point for substrate.

In terms of assembly, monomer.

It is found in the periplasm. Its pathway is cell wall biogenesis; peptidoglycan biosynthesis. Its activity is regulated as follows. Is irreversibly inactivated by the beta-lactams carbapenems via the formation of a covalent adduct resulting from acylation of the catalytic Cys. In terms of biological role, generates 3-&gt;3 cross-links in peptidoglycan, catalyzing the cleavage of the mDap(3)-D-Ala(4) bond of a tetrapeptide donor stem and the formation of a bond between the carbonyl of mDap(3) of the donor stem and the side chain of mDap(3) of the acceptor stem. Is specific for donor substrates containing a stem tetrapeptide since it cannot use pentapeptide stems. The polypeptide is L,D-transpeptidase 1 (ldtA) (Mycobacterium tuberculosis (strain CDC 1551 / Oshkosh)).